Reading from the N-terminus, the 583-residue chain is Membrane-bound O-acyltransferase gup1 (583 aa).

Over 1-52 the chain is Extracellular; it reads MLRLFRFDVLETSTKDTERPNSKSSRLSSTSGSSHPSSSSRLTVRSAVPEKS. A disordered region spans residues 15-42; the sequence is KDTERPNSKSSRLSSTSGSSHPSSSSRL. Over residues 22–40 the composition is skewed to low complexity; it reads SKSSRLSSTSGSSHPSSSS. A helical transmembrane segment spans residues 53–73; sequence AFGSIEFIFYFSVILSILTIA. The Cytoplasmic portion of the chain corresponds to 74-119; sequence CFKIHYVSSPKHPNYKNIEKYLKPGWLFGQKVDSADFQYSAFRENM. Residues 120–140 form a helical membrane-spanning segment; it reads PILLLVIIVYNFLWRLVKLVF. At 141-159 the chain is on the extracellular side; the sequence is TKNTNDELAIKNNYRLCFS. A helical transmembrane segment spans residues 160–180; it reads LLFALLVYGTGVIYVLTIALI. The Cytoplasmic portion of the chain corresponds to 181–191; the sequence is NYLISKSLKNS. Residues 192–212 traverse the membrane as a helical segment; sequence IFNPLLTWTLDISVVFFKEYF. Residues 213–298 lie on the Extracellular side of the membrane; the sequence is AYCKFSSLHP…SCLDEDYNLK (86 aa). Residues 299–319 form a helical membrane-spanning segment; it reads NFLTYIFYAPLYLAGPIISFN. The Cytoplasmic portion of the chain corresponds to 320-343; it reads NFMSQMKYPTVSTLKYRNLLYAIR. The chain crosses the membrane as a helical span at residues 344–364; the sequence is FLVCVLTMEFLLHYAYVTAIS. The Extracellular portion of the chain corresponds to 365 to 373; that stretch reads KDGNWNQYS. A helical membrane pass occupies residues 374 to 394; that stretch reads AVESAMISFIVLFMTWLKLLI. Over 395–444 the chain is Cytoplasmic; the sequence is PWRLFRLWSLIDDIEPPENIVRCMCNNYSAVGFWRAWHRSFNRWLIRYIY. 2 consecutive transmembrane segments (helical) span residues 445-465 and 466-486; these read VPLG…TFVA and LWHD…LFIL. His468 is an active-site residue. Over 487–512 the chain is Cytoplasmic; that stretch reads PERLCCFMSRRTGLTKHPYYRYISGF. The chain crosses the membrane as a helical span at residues 513–533; it reads GAALNIYFMIICNLIGFAVGI. Over 534-549 the chain is Extracellular; the sequence is DGIKNVLVSFFLTLKG. The helical transmembrane segment at 550–570 threads the bilayer; that stretch reads AMSAIAAFIMFFSAVQIMFQI. Residues 571–583 lie on the Cytoplasmic side of the membrane; the sequence is RVNEEEEGINLRC.

Belongs to the membrane-bound acyltransferase family.

It is found in the cell membrane. The protein resides in the endoplasmic reticulum membrane. Its subcellular location is the mitochondrion membrane. Its function is as follows. Membrane-bound O-acyltransferase involved in the remodeling of glycosylphosphatidylinositol (GPI) anchors. Acts only on GPI-anchored proteins, but not on free GPI lipids. Also involved in lipid metabolism, having profound effects on sphingolipid-sterol-ordered domains integrity and assembly. Involved in cell integrity and apoptosis. This Schizosaccharomyces pombe (strain 972 / ATCC 24843) (Fission yeast) protein is Membrane-bound O-acyltransferase gup1 (gup1).